Consider the following 98-residue polypeptide: ESAT-6-like protein EsxJ (98 aa).

Belongs to the WXG100 family. CFP-10 subfamily.

The protein resides in the secreted. The protein is ESAT-6-like protein EsxJ of Mycobacterium bovis (strain ATCC BAA-935 / AF2122/97).